The primary structure comprises 621 residues: tRNA 5-methylaminomethyl-2-thiouridine biosynthesis bifunctional protein MnmC (621 aa).

The tract at residues 1-222 is tRNA (mnm(5)s(2)U34)-methyltransferase; that stretch reads MKNANLSFKG…KRQMSSAVLE (222 aa). The FAD-dependent cmnm(5)s(2)U34 oxidoreductase stretch occupies residues 250–621; it reads IGTGVAGLAT…LIRKLKKGLK (372 aa).

It in the N-terminal section; belongs to the methyltransferase superfamily. tRNA (mnm(5)s(2)U34)-methyltransferase family. In the C-terminal section; belongs to the DAO family. FAD is required as a cofactor.

The protein resides in the cytoplasm. The catalysed reaction is 5-aminomethyl-2-thiouridine(34) in tRNA + S-adenosyl-L-methionine = 5-methylaminomethyl-2-thiouridine(34) in tRNA + S-adenosyl-L-homocysteine + H(+). Functionally, catalyzes the last two steps in the biosynthesis of 5-methylaminomethyl-2-thiouridine (mnm(5)s(2)U) at the wobble position (U34) in tRNA. Catalyzes the FAD-dependent demodification of cmnm(5)s(2)U34 to nm(5)s(2)U34, followed by the transfer of a methyl group from S-adenosyl-L-methionine to nm(5)s(2)U34, to form mnm(5)s(2)U34. The chain is tRNA 5-methylaminomethyl-2-thiouridine biosynthesis bifunctional protein MnmC from Campylobacter concisus (strain 13826).